The primary structure comprises 413 residues: Peptidase T (413 aa).

A Zn(2+)-binding site is contributed by H82. D84 is an active-site residue. D144 serves as a coordination point for Zn(2+). The active-site Proton acceptor is E178. Zn(2+) is bound by residues E179, D201, and H383.

It belongs to the peptidase M20B family. In terms of assembly, homotrimer. Zn(2+) serves as cofactor.

The protein resides in the cytoplasm. The enzyme catalyses Release of the N-terminal residue from a tripeptide.. Its activity is regulated as follows. Totally inhibited by EDTA, EGTA, and 1,10-phenanthroline. Strongly inhibited by divalent cations such as Cu(2+), Cd(2+), Co(2+) and Mn(2+). Partially inhibited by the reducing agents 2-mercaptoethanol and dithiothreitol. Cleaves the N-terminal amino acid of tripeptides. Shows broad substrate specificity, exhibiting maximum activity against hydrophobic tripeptides, with the highest activity for Met-Gly-Gly. Therefore this enzyme may play an important role in flavor formation during cheese ripening. Is also able to slowly hydrolyze some hydrophobic dipeptides, but displays no activity against tetrapeptides and the tripeptide Phe-Gly-Gly. The protein is Peptidase T (pepT) of Lactobacillus helveticus (Lactobacillus suntoryeus).